Consider the following 126-residue polypeptide: Holo-[acyl-carrier-protein] synthase (126 aa).

Asp-9 and Glu-58 together coordinate Mg(2+).

Belongs to the P-Pant transferase superfamily. AcpS family. It depends on Mg(2+) as a cofactor.

It localises to the cytoplasm. It carries out the reaction apo-[ACP] + CoA = holo-[ACP] + adenosine 3',5'-bisphosphate + H(+). Transfers the 4'-phosphopantetheine moiety from coenzyme A to a Ser of acyl-carrier-protein. The polypeptide is Holo-[acyl-carrier-protein] synthase (Yersinia enterocolitica serotype O:8 / biotype 1B (strain NCTC 13174 / 8081)).